A 196-amino-acid chain; its full sequence is Adenine phosphoribosyltransferase (196 aa).

Belongs to the purine/pyrimidine phosphoribosyltransferase family. Homodimer.

Its subcellular location is the cytoplasm. It catalyses the reaction AMP + diphosphate = 5-phospho-alpha-D-ribose 1-diphosphate + adenine. The protein operates within purine metabolism; AMP biosynthesis via salvage pathway; AMP from adenine: step 1/1. Functionally, catalyzes a salvage reaction resulting in the formation of AMP, that is energically less costly than de novo synthesis. In Methylibium petroleiphilum (strain ATCC BAA-1232 / LMG 22953 / PM1), this protein is Adenine phosphoribosyltransferase.